A 125-amino-acid chain; its full sequence is Ino eighty subunit 5 (125 aa).

T124 is modified (phosphothreonine).

Component of the chromatin-remodeling INO80 complex, at least composed of ARP4, ARP5, ARP8, RVB1, RVB2, TAF14, NHP10, IES1, IES3, IES4, IES6, ACT1, IES2, IES5 and INO80.

The protein localises to the nucleus. The polypeptide is Ino eighty subunit 5 (IES5) (Saccharomyces cerevisiae (strain ATCC 204508 / S288c) (Baker's yeast)).